Consider the following 485-residue polypeptide: GTPase Obg (485 aa).

The Obg domain maps to 2–159 (PRFVDRVVIH…RDLTLELKTV (158 aa)). The OBG-type G domain maps to 160 to 341 (ADVGLIGFPS…LIFALWEMVK (182 aa)). GTP is bound by residues 166–173 (GFPSAGKS), 191–195 (FTTLV), 212–215 (DVPG), 292–295 (NKID), and 322–324 (STV). Residues Ser-173 and Thr-193 each contribute to the Mg(2+) site. Positions 359-437 (PIPVDESGFT…IGDVTFDWEP (79 aa)) constitute an OCT domain. A disordered region spans residues 450–485 (RGTDIRLEQTDRVGAAERKAARRERRQPGESGGEDS). Over residues 452–468 (TDIRLEQTDRVGAAERK) the composition is skewed to basic and acidic residues.

The protein belongs to the TRAFAC class OBG-HflX-like GTPase superfamily. OBG GTPase family. In terms of assembly, monomer. It depends on Mg(2+) as a cofactor.

It localises to the cytoplasm. Functionally, an essential GTPase which binds GTP, GDP and possibly (p)ppGpp with moderate affinity, with high nucleotide exchange rates and a fairly low GTP hydrolysis rate. Plays a role in control of the cell cycle, stress response, ribosome biogenesis and in those bacteria that undergo differentiation, in morphogenesis control. The sequence is that of GTPase Obg from Mycolicibacterium smegmatis (strain ATCC 700084 / mc(2)155) (Mycobacterium smegmatis).